The primary structure comprises 3172 residues: MSGDNGMTEEKLRRYLKRTVTELDSVTARLREVEHRAGEPIAIVGMACRFPGDVDSPESFWEFVSGGGDAIAEAPADRGWEPDPDARLGGMLAAAGDFDAGFFGISPREALAMDPQQRIMLEISWEALERAGHDPVSLRGSATGVFTGVGTVDYGPRPDEAPDEVLGYVGTGTASSVASGRVAYCLGLEGPAMTVDTACSSGLTALHLAMESLRRDECGLALAGGVTVMSSPGAFTEFRSQGGLAADGRCKPFSKAADGFGLAEGAGVLVLQRLSAARREGRPVLAVLAGSAVNQDGASNGLTAPSGPAQQRVIRRALENAGVRAGDVDYVEAHGTGTRLGDPIEVHALLSTYGAERDPDDPLWIGSVKSNIGHTQAAAGVAGVMKAVLALRHGEMPRTLHFDEPSPQIEWDLGAVSVVSQARSWPAGERPRRAGVSSFGISGTNAHVIVEEAPEADEPEPAPDSGPVPLVLSGRDEQAMRAQAGRLADHLAPEPRNSLRDTGFTLATRASAMEHRAVVVGDRDEALAGLRAVADRRIADRTATGQGPNSPRRVAMVFPGQGAQWQGMARDLLRESQVFADSIRDCERALAPHVDWSLTDLLSGARPLDRVDVVQPALFAVMVSLAALWRSHGVEPAAVVGHSQGEIAAAHVAGALTLEDAAKLVAVRSRVLRRLGGQGGMASFGLGTEQAAERIGRFAGALSIASVNGPRSVVVVAGESGPLDELIAECEAEAHKARRIPVDYASHSPQVESLREELLTELAGISPVSADVALYSTTTGQPIDTATMDTAYWYANLREQVRFQDATRQLAEAGFDAFVEVSPHPVLTVGIEATLDSALPADAGACVVGTLRRDRGGLADFHTALGEAYAQGVEVDWSPAFADARPVELPVYPFQRYWLPIPTGGRARDEDDDWRYQVVWREAEWESASLAGRVLLVTGPGVPSELSDAIRSGLEQSGATVLTCDVESRSTIGTALEAADTDALSTVGVAAVPHGEAVDPSLDALALVQALGAAGVEAPLWVLTRNAVQVADGELVDPAQAMVGGLGRVVGIEQPGRWGGLVDLVDADAASIRSLAAVLADPRGEEQVAIRADGIKVARLVPAPARARTHPLEPLAGTVLVTGGTGGIGAHLARWLARSGAEHLVLLGRRGADAPGASELREELTALGTGVTIAACDVADRARLEAVLAAEAAAEGRTVSAVMHAAGVSTSTPLDDLTEAEFTEIADVKVRGTVNLDELCPDLDAFVLFSSNAGVWGSPGLASYAAANAFLDGFARAARSEGAPVTSIAWGLWAGQNMAGDEGGEYLRSQGLRAMDPDRAVEELHITLDHGQTSVSVVDMDRRRFVELFTAARHRPLFDEIAGARAEARQSEEGPALAQRLAALLCDGREREHLAHLIRAEVAAVLGHGDDAAIDRDRAFRDLGFDSMTAVDLRNRLAAVTGVREAATVVFDHPTITRLADHYLERLVGAAEAEQAPALVREVPPKDADDPIAIVGMACRFPGGVHNPGELWEFIVGGGDAVTEMPTDRGWDLDALFDPDPQRHGTSYSRHGAFLDGAADFDAAFFGISPREALAMDPQQRQVLETTWELFENAGIDPHSVRGSDTGVFLGAAYQGYGQDAVVPEDSEGYLLTGNSSAVVSGRVAYVLGLEGPAVTVDTACSSSLVALHSACGSLRDGDCGLAVAGGVSVMAGPEVFTEFSRQGGLAVDGRCKAFSAEADGFGLPEGVAVVQLQRLSDGPAEGGRQVLGVVAGSAINQDGATNGLAAPSGVAQQRVIRKAWARAGITGADVAVVEAHGTGTRLGDPVEASALLATYGKSRGSSGPVLLGSVKSNIGHAQAAAGVAGVIKVVLGLNRGLVPPMLCRGERSPLIEWSSGGVELAEAVSPWPPAADGVRRAGVSAFGVSGTNAHVIIAEPPEPEPLPEPGPVGVLAAANSVPVLLSARTETALAAQARLLESAVDDSVPLTALASALATGRAHLPRRAALLAGDHEQLRGQLRAVAEGVAAPGATTGTASAGGVVFVFPGQGAQWEGMARGLLSVPVFAESIAECDAVLSEVAGFSASEVLEQRPDAPSLERVDVVQPVLFSVMVSLARLWGACGVSPSAVIGHSQGEIAAAVVAGVLSLEDGVRVVALRAKALRALAGKGGMVSLAAPGERARALIAPWEDRISVAAVNSPSSVVVSGDPEALAELVARCEDEGVRAKTLPVDYASHSRHVEEIRETILADLDGISARRAAIPLYSTLHGERRDMGPRYWYDNLRSQVRFDEAVSAQSPDGHATFVEMSPHPVLTAAVQEIAADAVAIGSLHRDTAEEHLIAELARAHVHGVAVDWRNVFPAAPPVALPNYPFEPQRYWLAPEVSDQLADSRYRVDWRPLATTPVDLEGGFLVHGSAPESLTSAVEKAGGVVPVASADREALAAALREVPGEVAGVLSVHTGAANALALHQSLGEAGVRAPLWLVTSRAVALGESEPVDPEQAMVWGLGRVMGLETPERWGGLVDLPAEPAPGDGEAFVACLGADGHEDQVAIRDHARYGRRLVRAPLGTRESSWEPAGTALVTGGTGALGGHVARHLARCGVEDLVLVSRRGVDAPAAAELEAELVALGPKTTITACDVADREQLSKLLEELRGQGRPVRTVVHTAGVPESRPLHEIGELESVCAAKVTGARLLDELCPDAETFVLFSSGAGVWGSANLGAYSAANAYLDALAHRRRAEGRAATSVAWGAWAGEGMATGDLEGLTRRGLRPMAPDRAIRALHQALDNGDTCVSIADVDWEAFAVGFTAARPRPLLDELVTPAVGAVPAVQAAPAREMTSQELLEFTHSHVAAILGHSSPDAVGQDQPFTELGFDSLTAVGLRNQLQQATGLALPATLVFEHPTVRRLADHIGQQLDSGTPAREASSALRDGYRQAGVSGRVRSYLDLLAGLSDFREHFDGSDGFSLDLVDMADGPGEVTVICCAGTAAISGPHEFTRLAGALRGIAPVRAVPQPGYEEGEPLPSSMAAVAAVQADAVIRTQGDKPFVVAGHSAGALMAYALATELLDRGHPPRGVVLIDVYPPGHQDAMNAWLEELTATLFDRETVRMDDTRLTALGAYDRLTGQWRPRETGLPTLLVSAGEPMGPWPDDSWKPTWPFEHDTVAVPGDHFTMVQEHADAIARHIDAWLGGGNS.

Residues 38–452 form the Ketosynthase family 3 (KS3) 1 domain; that stretch reads GEPIAIVGMA…GTNAHVIVEE (415 aa). 2 module regions span residues 41–1464 and 1492–2891; these read IAIV…DHYL and IAIV…DHIG. Residue Cys199 is the Acyl-thioester intermediate; for beta-ketoacyl synthase 1 activity of the active site. Residues His334 and His374 each act as for beta-ketoacyl synthase 1 activity in the active site. Residues 557–874 are acyltransferase 1; it reads VFPGQGAQWQ…LGEAYAQGVE (318 aa). The active-site Acyl-ester intermediate; for acyltransferase 1 activity is Ser643. Positions 1117–1294 are beta-ketoacyl reductase 1; sequence GTVLVTGGTG…VTSIAWGLWA (178 aa). NADP(+) contacts are provided by residues 1125-1128, 1148-1151, 1177-1178, Lys1229, and 1249-1250; these read TGGI, GRRG, DV, and FS. Tyr1264 serves as the catalytic Acyl-ester intermediate; for beta-ketoacyl reductase 1 activity. Residues 1392 to 1467 form the Carrier 1 domain; that stretch reads EHLAHLIRAE…RLADHYLERL (76 aa). O-(pantetheine 4'-phosphoryl)serine is present on Ser1427. Residues 1489-1916 enclose the Ketosynthase family 3 (KS3) 2 domain; the sequence is DDPIAIVGMA…GTNAHVIIAE (428 aa). Cys1661 acts as the Acyl-thioester intermediate; for beta-ketoacyl synthase 2 activity in catalysis. Catalysis depends on for beta-ketoacyl synthase 2 activity residues His1797 and His1837. An acyltransferase 2 region spans residues 2022-2331; that stretch reads VFVFPGQGAQ…LARAHVHGVA (310 aa). Catalysis depends on Ser2112, which acts as the Acyl-ester intermediate; for acyltransferase 2 activity. Residues 2557–2731 are beta-ketoacyl reductase 2; sequence GTALVTGGTG…ATSVAWGAWA (175 aa). Residues 2565–2568, 2588–2591, 2617–2618, Lys2666, and 2686–2687 contribute to the NADP(+) site; these read TGAL, SRRG, DV, and FS. Residue Tyr2701 is the Acyl-ester intermediate; for beta-ketoacyl reductase 2 activity of the active site. The Carrier 2 domain maps to 2819–2894; the sequence is QELLEFTHSH…RLADHIGQQL (76 aa). An O-(pantetheine 4'-phosphoryl)serine modification is found at Ser2854. Residues 2960–3166 are thioesterase; that stretch reads ICCAGTAAIS…DAIARHIDAW (207 aa). Thr2965 provides a ligand contact to substrate. Ser3031 functions as the Nucleophile; for thioesterase activity in the catalytic mechanism. Substrate-binding residues include Ala3032 and Asp3058. His3148 acts as the Proton acceptor; for thioesterase activity in catalysis.

Homodimer. Erythronolide synthase is composed of EryAI, EryAII and EryAIII multimodular (2 modules) polypeptides each coding for a functional synthase subunit which participates in 2 of the six FAS-like elongation steps required for formation of the polyketide. Module 1, 2, 3, 4, 5, and 6 participating in biosynthesis steps 1, 2, 3, 4, 5, and 6, respectively. It depends on pantetheine 4'-phosphate as a cofactor.

It catalyses the reaction 6 (S)-methylmalonyl-CoA + propanoyl-CoA + 6 NADPH + 12 H(+) = 6-deoxyerythronolide B + 6 CO2 + 6 NADP(+) + 7 CoA + H2O. It functions in the pathway antibiotic biosynthesis; erythromycin biosynthesis. With respect to regulation, inhibited by diphenyl phosphonates derivatives such as diphenyl allylphosphonate. In terms of biological role, involved in the biosynthesis of antibiotic erythromycin via the biosynthesis of its aglycone precursor, 6-deoxyerythronolide B (6-dEB). The sequence is that of Erythronolide synthase EryA3 from Saccharopolyspora erythraea (Streptomyces erythraeus).